A 550-amino-acid chain; its full sequence is CTP synthase (550 aa).

Residues 1-270 form an amidoligase domain region; it reads MTKFVFVTGG…DRLICEELRL (270 aa). Residue Ser-13 participates in CTP binding. UTP is bound at residue Ser-13. Residues 14–19 and Asp-71 contribute to the ATP site; that span reads SLGKGI. 2 residues coordinate Mg(2+): Asp-71 and Glu-144. CTP-binding positions include 151–153, 191–196, and Lys-227; these read DIE and KTKPTQ. Residues 191–196 and Lys-227 contribute to the UTP site; that span reads KTKPTQ. Residues 295 to 547 form the Glutamine amidotransferase type-1 domain; that stretch reads TIGMVGKYVD…VEAALASQQR (253 aa). Position 356 (Gly-356) interacts with L-glutamine. Catalysis depends on Cys-383, which acts as the Nucleophile; for glutamine hydrolysis. L-glutamine-binding positions include 384-387, Glu-407, and Arg-473; that span reads LGMQ. Catalysis depends on residues His-520 and Glu-522.

Belongs to the CTP synthase family. As to quaternary structure, homotetramer.

The enzyme catalyses UTP + L-glutamine + ATP + H2O = CTP + L-glutamate + ADP + phosphate + 2 H(+). It carries out the reaction L-glutamine + H2O = L-glutamate + NH4(+). The catalysed reaction is UTP + NH4(+) + ATP = CTP + ADP + phosphate + 2 H(+). It functions in the pathway pyrimidine metabolism; CTP biosynthesis via de novo pathway; CTP from UDP: step 2/2. Allosterically activated by GTP, when glutamine is the substrate; GTP has no effect on the reaction when ammonia is the substrate. The allosteric effector GTP functions by stabilizing the protein conformation that binds the tetrahedral intermediate(s) formed during glutamine hydrolysis. Inhibited by the product CTP, via allosteric rather than competitive inhibition. In terms of biological role, catalyzes the ATP-dependent amination of UTP to CTP with either L-glutamine or ammonia as the source of nitrogen. Regulates intracellular CTP levels through interactions with the four ribonucleotide triphosphates. The protein is CTP synthase of Cupriavidus taiwanensis (strain DSM 17343 / BCRC 17206 / CCUG 44338 / CIP 107171 / LMG 19424 / R1) (Ralstonia taiwanensis (strain LMG 19424)).